The primary structure comprises 480 residues: Glutamyl-tRNA(Gln) amidotransferase subunit A (480 aa).

Catalysis depends on charge relay system residues Lys76 and Ser151. Ser175 (acyl-ester intermediate) is an active-site residue.

It belongs to the amidase family. GatA subfamily. In terms of assembly, heterotrimer of A, B and C subunits.

The enzyme catalyses L-glutamyl-tRNA(Gln) + L-glutamine + ATP + H2O = L-glutaminyl-tRNA(Gln) + L-glutamate + ADP + phosphate + H(+). Functionally, allows the formation of correctly charged Gln-tRNA(Gln) through the transamidation of misacylated Glu-tRNA(Gln) in organisms which lack glutaminyl-tRNA synthetase. The reaction takes place in the presence of glutamine and ATP through an activated gamma-phospho-Glu-tRNA(Gln). This Exiguobacterium sp. (strain ATCC BAA-1283 / AT1b) protein is Glutamyl-tRNA(Gln) amidotransferase subunit A.